The sequence spans 369 residues: Flagellar P-ring protein (369 aa).

An N-terminal signal peptide occupies residues 1-23 (MIKQFAVSLLLVLLTLVTTTASA).

This sequence belongs to the FlgI family. The basal body constitutes a major portion of the flagellar organelle and consists of four rings (L,P,S, and M) mounted on a central rod.

Its subcellular location is the periplasm. It localises to the bacterial flagellum basal body. Its function is as follows. Assembles around the rod to form the L-ring and probably protects the motor/basal body from shearing forces during rotation. This is Flagellar P-ring protein from Photorhabdus laumondii subsp. laumondii (strain DSM 15139 / CIP 105565 / TT01) (Photorhabdus luminescens subsp. laumondii).